The following is a 399-amino-acid chain: uncharacterized protein (399 aa).

The Cytoplasmic portion of the chain corresponds to 1–8 (MHNLQVRR). The chain crosses the membrane as a helical span at residues 9-35 (HYAALKGFYLFAFLGTGSIIPLLSMYL). Over 36–42 (TKEQHLS) the chain is Extracellular. Residues 43–71 (GSQVGLIMSLGPIVMIFFQPFWGMLSDYT) form a helical membrane-spanning segment. The Cytoplasmic segment spans residues 72–75 (QKTK). A helical transmembrane segment spans residues 76–101 (GLLAVCTSITGIIGLAYIAFDSFPLF). Residues 102–105 (ILIA) lie on the Extracellular side of the membrane. A helical transmembrane segment spans residues 106-123 (ACFAAFQSTIIPLSDSIS). Residues 124-134 (LRYTQETNGNY) are Cytoplasmic-facing. Residues 135–157 (GGIRLFGSLGFGVAVFAMGQVTN) traverse the membrane as a helical segment. The Extracellular segment spans residues 158-160 (QLY). Residues 161–180 (PIHVIFIFGCAFLCIAAILA) form a helical membrane-spanning segment. The Cytoplasmic portion of the chain corresponds to 181–210 (SQVPGQQKTTKVNIRKGFRELISNKTFLIF). Residues 211–230 (MIITFTTFAPNLANNTYFSL) traverse the membrane as a helical segment. Over 231–234 (FLDK) the chain is Extracellular. Residues 235–259 (SGASLSAIGILFFIGVISEIPFMRF) form a helical membrane-spanning segment. Residues 260–269 (AQTFIDKMGL) lie on the Cytoplasmic side of the membrane. The chain crosses the membrane as a helical span at residues 270–289 (LNVIMLSGGVSLFRWALYFT). At 290 to 292 (APS) the chain is on the extracellular side. A helical transmembrane segment spans residues 293-315 (LWIIYATVFLQGVAIGLFIPAAL). Over 316–327 (QYVKKITPRHVE) the chain is Cytoplasmic. The helical transmembrane segment at 328-355 (ATALTMYAAIGNGFGNWFCTFAGGYIFD) threads the bilayer. Topologically, residues 356–358 (YVS) are extracellular. A helical transmembrane segment spans residues 359–379 (IFAVYLLFGILSIAGFGLTLY). The Cytoplasmic portion of the chain corresponds to 380–399 (LMKAEKNKHTLHQPAVTFKP).

This sequence belongs to the major facilitator superfamily.

The protein resides in the cell membrane. This is an uncharacterized protein from Bacillus subtilis (strain 168).